A 497-amino-acid chain; its full sequence is Probable cytosol aminopeptidase (497 aa).

The Mn(2+) site is built by Lys265 and Asp270. The active site involves Lys277. Residues Asp288, Asp347, and Glu349 each contribute to the Mn(2+) site. Arg351 is a catalytic residue.

It belongs to the peptidase M17 family. Requires Mn(2+) as cofactor.

The protein localises to the cytoplasm. It catalyses the reaction Release of an N-terminal amino acid, Xaa-|-Yaa-, in which Xaa is preferably Leu, but may be other amino acids including Pro although not Arg or Lys, and Yaa may be Pro. Amino acid amides and methyl esters are also readily hydrolyzed, but rates on arylamides are exceedingly low.. It carries out the reaction Release of an N-terminal amino acid, preferentially leucine, but not glutamic or aspartic acids.. In terms of biological role, presumably involved in the processing and regular turnover of intracellular proteins. Catalyzes the removal of unsubstituted N-terminal amino acids from various peptides. The chain is Probable cytosol aminopeptidase from Geobacillus sp. (strain WCH70).